Reading from the N-terminus, the 315-residue chain is Acetyl-coenzyme A carboxylase carboxyl transferase subunit alpha (315 aa).

The CoA carboxyltransferase C-terminal domain occupies 40–293; it reads LQDKSKTLTE…RAELSSQLAM (254 aa).

This sequence belongs to the AccA family. Acetyl-CoA carboxylase is a heterohexamer composed of biotin carboxyl carrier protein (AccB), biotin carboxylase (AccC) and two subunits each of ACCase subunit alpha (AccA) and ACCase subunit beta (AccD).

It is found in the cytoplasm. It catalyses the reaction N(6)-carboxybiotinyl-L-lysyl-[protein] + acetyl-CoA = N(6)-biotinyl-L-lysyl-[protein] + malonyl-CoA. Its pathway is lipid metabolism; malonyl-CoA biosynthesis; malonyl-CoA from acetyl-CoA: step 1/1. Its function is as follows. Component of the acetyl coenzyme A carboxylase (ACC) complex. First, biotin carboxylase catalyzes the carboxylation of biotin on its carrier protein (BCCP) and then the CO(2) group is transferred by the carboxyltransferase to acetyl-CoA to form malonyl-CoA. The protein is Acetyl-coenzyme A carboxylase carboxyl transferase subunit alpha of Pseudomonas fluorescens (strain Pf0-1).